A 261-amino-acid polypeptide reads, in one-letter code: Hemin import ATP-binding protein HmuV (261 aa).

The ABC transporter domain occupies 5–241 (LTANAASFAI…DLLARVFDVD (237 aa)). 37-44 (GPNGAGKS) contacts ATP.

Belongs to the ABC transporter superfamily. Heme (hemin) importer (TC 3.A.1.14.5) family. As to quaternary structure, the complex is composed of two ATP-binding proteins (HmuV), two transmembrane proteins (HmuU) and a solute-binding protein (HmuT).

It is found in the cell inner membrane. Functionally, part of the ABC transporter complex HmuTUV involved in hemin import. Responsible for energy coupling to the transport system. This chain is Hemin import ATP-binding protein HmuV, found in Rhodopseudomonas palustris (strain BisB5).